The sequence spans 182 residues: UPF0301 protein CHU_1773 (182 aa).

The protein belongs to the UPF0301 (AlgH) family.

The protein is UPF0301 protein CHU_1773 of Cytophaga hutchinsonii (strain ATCC 33406 / DSM 1761 / CIP 103989 / NBRC 15051 / NCIMB 9469 / D465).